A 544-amino-acid polypeptide reads, in one-letter code: Ribosomal protein S6 kinase-like 1 (544 aa).

The region spanning 87 to 115 is the MIT domain; that stretch reads VHVDPNKERREAVKLKITKYLRRAEEIFN. The region spanning 145–534 is the Protein kinase domain; that stretch reads SALEQLKGCR…TSRLKSHPFF (390 aa). ATP is bound by residues 151 to 159 and Lys-177; that span reads KGCRVVGII. Disordered stretches follow at residues 262 to 344 and 353 to 372; these read PAEL…HWVR and AYGR…SLGS. Polar residues predominate over residues 303–313; sequence SRPSAVFSSDP. The active-site Proton acceptor is Asp-407.

It belongs to the protein kinase superfamily. Ser/Thr protein kinase family. S6 kinase subfamily.

It carries out the reaction L-seryl-[protein] + ATP = O-phospho-L-seryl-[protein] + ADP + H(+). The catalysed reaction is L-threonyl-[protein] + ATP = O-phospho-L-threonyl-[protein] + ADP + H(+). The polypeptide is Ribosomal protein S6 kinase-like 1 (Rps6kl1) (Mus musculus (Mouse)).